Consider the following 30-residue polypeptide: Mejucin (30 aa).

The protein localises to the secreted. Its function is as follows. Bacteriocin that inhibits the growth of several Gram-positive bacteria, especially the food-borne pathogens L.monocytogenes, B.cereus strain ATCC 11778, B.cereus strain ATCC 21366, B.cereus strain ATCC 10876 and B.cereus strain ATCC 14579. Likely to act by disrupting the pathogen membrane resulting in leakage of intracellular constituents. Does not inhibit the growth of Gram-negative bacteria. The sequence is that of Mejucin from Bacillus subtilis.